Reading from the N-terminus, the 235-residue chain is Large ribosomal subunit protein uL1 (235 aa).

The protein belongs to the universal ribosomal protein uL1 family. Part of the 50S ribosomal subunit.

Binds directly to 23S rRNA. The L1 stalk is quite mobile in the ribosome, and is involved in E site tRNA release. Its function is as follows. Protein L1 is also a translational repressor protein, it controls the translation of the L11 operon by binding to its mRNA. The sequence is that of Large ribosomal subunit protein uL1 from Mycobacterium bovis (strain ATCC BAA-935 / AF2122/97).